The following is a 383-amino-acid chain: Probable endopolygalacturonase C (383 aa).

The N-terminal stretch at 1-16 (MVRQLILISSLLAAVA) is a signal peptide. Residues 17–40 (VRAPADPAHPMVTEAPDVNLVEKR) constitute a propeptide that is removed on maturation. A disulfide bond links Cys-44 and Cys-62. 2 PbH1 repeats span residues 175-206 (STDL…DIGE) and 207-228 (STYI…AINS). Asp-221 functions as the Proton donor in the catalytic mechanism. A disulfide bridge connects residues Cys-223 and Cys-239. Residue His-243 is part of the active site. PbH1 repeat units lie at residues 253-279 (RDDN…RIKT) and 287-309 (VSEV…VIEQ). Asn-260 carries N-linked (GlcNAc...) asparagine glycosylation. Disulfide bonds link Cys-348–Cys-353 and Cys-372–Cys-381.

Belongs to the glycosyl hydrolase 28 family.

Its subcellular location is the secreted. It carries out the reaction (1,4-alpha-D-galacturonosyl)n+m + H2O = (1,4-alpha-D-galacturonosyl)n + (1,4-alpha-D-galacturonosyl)m.. Involved in maceration and soft-rotting of plant tissue. Hydrolyzes the 1,4-alpha glycosidic bonds of de-esterified pectate in the smooth region of the plant cell wall. The polypeptide is Probable endopolygalacturonase C (pgaC) (Aspergillus niger).